Here is a 188-residue protein sequence, read N- to C-terminus: Putative manganese efflux pump MntP (188 aa).

6 helical membrane passes run 3 to 23, 39 to 59, 65 to 85, 104 to 124, 125 to 145, and 167 to 187; these read MITL…VALG, LGWH…LAGL, IETY…GKMI, GMSL…VGLS, LAIV…IAGV, and IAGG…HTLG.

The protein belongs to the MntP (TC 9.B.29) family.

It localises to the cell inner membrane. Probably functions as a manganese efflux pump. This chain is Putative manganese efflux pump MntP, found in Syntrophotalea carbinolica (strain DSM 2380 / NBRC 103641 / GraBd1) (Pelobacter carbinolicus).